Here is a 189-residue protein sequence, read N- to C-terminus: Xanthine phosphoribosyltransferase (189 aa).

Xanthine is bound by residues leucine 20 and asparagine 27. Residue 128–132 (ANGKA) participates in 5-phospho-alpha-D-ribose 1-diphosphate binding. Lysine 156 lines the xanthine pocket.

It belongs to the purine/pyrimidine phosphoribosyltransferase family. Xpt subfamily. In terms of assembly, homodimer.

The protein localises to the cytoplasm. The catalysed reaction is XMP + diphosphate = xanthine + 5-phospho-alpha-D-ribose 1-diphosphate. It functions in the pathway purine metabolism; XMP biosynthesis via salvage pathway; XMP from xanthine: step 1/1. In terms of biological role, converts the preformed base xanthine, a product of nucleic acid breakdown, to xanthosine 5'-monophosphate (XMP), so it can be reused for RNA or DNA synthesis. The protein is Xanthine phosphoribosyltransferase of Pseudomonas syringae pv. syringae (strain B728a).